The primary structure comprises 192 residues: Phosphoheptose isomerase (192 aa).

The 156-residue stretch at 37 to 192 (LADSFKAGGK…IQLIEKEMVK (156 aa)) folds into the SIS domain. Residue 52–54 (NGG) participates in substrate binding. Zn(2+) is bound by residues H61 and E65. Residues E65, 93-94 (ND), 119-121 (STS), S124, and Q172 contribute to the substrate site. Zn(2+)-binding residues include Q172 and H180.

It belongs to the SIS family. GmhA subfamily. As to quaternary structure, homotetramer. Zn(2+) serves as cofactor.

It localises to the cytoplasm. The catalysed reaction is 2 D-sedoheptulose 7-phosphate = D-glycero-alpha-D-manno-heptose 7-phosphate + D-glycero-beta-D-manno-heptose 7-phosphate. Its pathway is carbohydrate biosynthesis; D-glycero-D-manno-heptose 7-phosphate biosynthesis; D-glycero-alpha-D-manno-heptose 7-phosphate and D-glycero-beta-D-manno-heptose 7-phosphate from sedoheptulose 7-phosphate: step 1/1. In terms of biological role, catalyzes the isomerization of sedoheptulose 7-phosphate in D-glycero-D-manno-heptose 7-phosphate. The sequence is that of Phosphoheptose isomerase from Escherichia coli O139:H28 (strain E24377A / ETEC).